We begin with the raw amino-acid sequence, 1168 residues long: Carboxylic acid reductase (1168 aa).

AMP is bound by residues H290, S385, 407–408, T412, D485, 497–500, K506, and K606; these read EG and YLDR. Residues 645–720 form the Carrier domain; that stretch reads APVLPTLCRA…ALADHIEAAR (76 aa). Residue S679 is modified to O-(pantetheine 4'-phosphoryl)serine. NADP(+) is bound by residues 777-780, R804, R814, 844-845, 870-872, S910, Y946, and K950; these read TGFL, DK, and PAA.

The protein belongs to the ATP-dependent AMP-binding enzyme family. Carboxylic acid reductase subfamily. Pantetheine 4'-phosphate serves as cofactor.

The catalysed reaction is a carboxylate + ATP + NADPH + H(+) = an aldehyde + AMP + diphosphate + NADP(+). It carries out the reaction a medium-chain fatty acid + ATP + H(+) = a medium-chain fatty acyl-AMP + diphosphate. The enzyme catalyses a long-chain fatty acid + ATP + H(+) = a long-chain fatty acyl-AMP + diphosphate. It catalyses the reaction dodecanoate + ATP + H(+) = dodecanoyl-AMP + diphosphate. The catalysed reaction is hexadecanoate + ATP + H(+) = hexadecanoyl-AMP + diphosphate. Catalyzes the ATP- and NADPH-dependent reduction of carboxylic acids to the corresponding aldehydes. In vitro, also catalyzes the activation of medium/long-chain fatty acids as acyl-adenylates (acyl-AMP). The polypeptide is Carboxylic acid reductase (Mycobacterium tuberculosis (strain ATCC 25618 / H37Rv)).